The chain runs to 245 residues: 8-amino-3,8-dideoxy-manno-octulosonate cytidylyltransferase (245 aa).

Belongs to the KdsB family.

The protein resides in the cytoplasm. The enzyme catalyses 8-amino-3,8-dideoxy-alpha-D-manno-octulosonate + CTP = CMP-8-amino-3,8-dideoxy-alpha-D-manno-oct-2-ulosonate + diphosphate. It participates in bacterial outer membrane biogenesis; lipopolysaccharide biosynthesis. In terms of biological role, activates KDO8N (a required 8-carbon sugar) for incorporation into bacterial lipopolysaccharide in the Shewanella genus. This chain is 8-amino-3,8-dideoxy-manno-octulosonate cytidylyltransferase, found in Shewanella frigidimarina (strain NCIMB 400).